Reading from the N-terminus, the 207-residue chain is Small ribosomal subunit protein uS4 (207 aa).

A disordered region spans residues 31–53; the sequence is KAKFDSKPGQHGRTSGARTSDYG. The 61-residue stretch at 97–157 folds into the S4 RNA-binding domain; it reads CRLDNVVYRM…EKSKKQARIV (61 aa).

It belongs to the universal ribosomal protein uS4 family. Part of the 30S ribosomal subunit. Contacts protein S5. The interaction surface between S4 and S5 is involved in control of translational fidelity.

Functionally, one of the primary rRNA binding proteins, it binds directly to 16S rRNA where it nucleates assembly of the body of the 30S subunit. Its function is as follows. With S5 and S12 plays an important role in translational accuracy. In Acidovorax ebreus (strain TPSY) (Diaphorobacter sp. (strain TPSY)), this protein is Small ribosomal subunit protein uS4.